The sequence spans 136 residues: MLAPKKQKFRKAHKGRVASKAKAGTMLAFGSFGLKSIDGWRVTARQIEAGRKAATRCMKRQGRLWIRIFPDVPVSKKPAEVRMGKGKGSPEFFAVRVSPGKIMFEIEGVEENIALRALELASAKLPVRTRIVRRYE.

This sequence belongs to the universal ribosomal protein uL16 family. As to quaternary structure, part of the 50S ribosomal subunit.

In terms of biological role, binds 23S rRNA and is also seen to make contacts with the A and possibly P site tRNAs. This Rickettsia akari (strain Hartford) protein is Large ribosomal subunit protein uL16.